A 319-amino-acid polypeptide reads, in one-letter code: Acetyl-coenzyme A carboxylase carboxyl transferase subunit alpha (319 aa).

In terms of domain architecture, CoA carboxyltransferase C-terminal spans 35 to 296 (NIDEEVHRLR…KAQLLADLAD (262 aa)).

The protein belongs to the AccA family. Acetyl-CoA carboxylase is a heterohexamer composed of biotin carboxyl carrier protein (AccB), biotin carboxylase (AccC) and two subunits each of ACCase subunit alpha (AccA) and ACCase subunit beta (AccD).

It is found in the cytoplasm. The catalysed reaction is N(6)-carboxybiotinyl-L-lysyl-[protein] + acetyl-CoA = N(6)-biotinyl-L-lysyl-[protein] + malonyl-CoA. It functions in the pathway lipid metabolism; malonyl-CoA biosynthesis; malonyl-CoA from acetyl-CoA: step 1/1. In terms of biological role, component of the acetyl coenzyme A carboxylase (ACC) complex. First, biotin carboxylase catalyzes the carboxylation of biotin on its carrier protein (BCCP) and then the CO(2) group is transferred by the carboxyltransferase to acetyl-CoA to form malonyl-CoA. In Shigella boydii serotype 4 (strain Sb227), this protein is Acetyl-coenzyme A carboxylase carboxyl transferase subunit alpha.